The sequence spans 335 residues: Biotin synthase (335 aa).

In terms of domain architecture, Radical SAM core spans 41–269; it reads KQIQVCKLIS…TSDVRLSAGR (229 aa). [4Fe-4S] cluster-binding residues include cysteine 56, cysteine 60, and cysteine 63. [2Fe-2S] cluster is bound by residues cysteine 100, cysteine 132, cysteine 192, and arginine 264.

This sequence belongs to the radical SAM superfamily. Biotin synthase family. As to quaternary structure, homodimer. [4Fe-4S] cluster serves as cofactor. It depends on [2Fe-2S] cluster as a cofactor.

The enzyme catalyses (4R,5S)-dethiobiotin + (sulfur carrier)-SH + 2 reduced [2Fe-2S]-[ferredoxin] + 2 S-adenosyl-L-methionine = (sulfur carrier)-H + biotin + 2 5'-deoxyadenosine + 2 L-methionine + 2 oxidized [2Fe-2S]-[ferredoxin]. Its pathway is cofactor biosynthesis; biotin biosynthesis; biotin from 7,8-diaminononanoate: step 2/2. Its function is as follows. Catalyzes the conversion of dethiobiotin (DTB) to biotin by the insertion of a sulfur atom into dethiobiotin via a radical-based mechanism. This is Biotin synthase from Nostoc sp. (strain PCC 7120 / SAG 25.82 / UTEX 2576).